Here is a 164-residue protein sequence, read N- to C-terminus: Lipoprotein signal peptidase (164 aa).

3 helical membrane-spanning segments follow: residues 12–32, 70–90, and 102–122; these read WLWLVVVVLIIDLGSKYLILQ, WFFAGIAIGISVTLVVMMYRS, and ALIIGGALGNLFDRLWHGFVV. Residues Asp-123 and Asp-141 contribute to the active site. The helical transmembrane segment at 137–157 threads the bilayer; the sequence is FNLADTAICVGAALIVLEGFL.

Belongs to the peptidase A8 family.

The protein localises to the cell inner membrane. It catalyses the reaction Release of signal peptides from bacterial membrane prolipoproteins. Hydrolyzes -Xaa-Yaa-Zaa-|-(S,diacylglyceryl)Cys-, in which Xaa is hydrophobic (preferably Leu), and Yaa (Ala or Ser) and Zaa (Gly or Ala) have small, neutral side chains.. Its pathway is protein modification; lipoprotein biosynthesis (signal peptide cleavage). In terms of biological role, this protein specifically catalyzes the removal of signal peptides from prolipoproteins. The sequence is that of Lipoprotein signal peptidase from Escherichia coli O157:H7.